We begin with the raw amino-acid sequence, 324 residues long: MNREQHGARHVPVLLERADELLGPALTEPGAVYVDATLGLGGHAEHFLTRYPGLRLVGLDRDTEALRLAGERLAPFAERITLVHTRYDGIADALGQAGLPPTGSVSAILMDLGVSSMQLDEAERGFAYSVDAPLDMRMDPTSGITAADVLNTYSHGDLARVLKNYGEERFAGKIASEVIRRRAHKPFETSGELVELLYATIPAAARRTGGHPAKRTFQALRVEVNGELDSLRAALPAALDALRVGGRIVVMSYQSLEDRVVKQELAARTSSRTPVDLPVELPGMGPEFRLLTRGAEKAGEREIAENPRAAPVRMRAAERIEAAS.

S-adenosyl-L-methionine contacts are provided by residues 41-43 (GGH), Asp-60, Tyr-87, Asp-111, and Gln-118.

The protein belongs to the methyltransferase superfamily. RsmH family.

The protein resides in the cytoplasm. The catalysed reaction is cytidine(1402) in 16S rRNA + S-adenosyl-L-methionine = N(4)-methylcytidine(1402) in 16S rRNA + S-adenosyl-L-homocysteine + H(+). Its function is as follows. Specifically methylates the N4 position of cytidine in position 1402 (C1402) of 16S rRNA. This is Ribosomal RNA small subunit methyltransferase H from Nocardia farcinica (strain IFM 10152).